A 43-amino-acid polypeptide reads, in one-letter code: Alpha-conotoxin-like Leo-A1 (43 aa).

Positions 1 to 26 (LTLDRASDDTDVAAEIMSGLIALAID) are excised as a propeptide. Cystine bridges form between cysteine 28-cysteine 34 and cysteine 29-cysteine 42. Residues 30–32 (SDS) are lacks the Ser-Xaa-Pro motif that is crucial for potent interaction with nAChR.

This sequence belongs to the conotoxin A superfamily. As to expression, expressed by the venom duct.

It is found in the secreted. Functionally, alpha-conotoxins act on postsynaptic membranes, they bind to the nicotinic acetylcholine receptors (nAChR) and thus inhibit them. Has possibly a distinct nAChR binding mode from other alpha-conotoxins, due to a different three residue motif (lacks the Ser-Xaa-Pro motif). The chain is Alpha-conotoxin-like Leo-A1 from Conus leopardus (Leopard cone).